Consider the following 171-residue polypeptide: Large ribosomal subunit protein uL10 (171 aa).

This sequence belongs to the universal ribosomal protein uL10 family. Part of the ribosomal stalk of the 50S ribosomal subunit. The N-terminus interacts with L11 and the large rRNA to form the base of the stalk. The C-terminus forms an elongated spine to which L12 dimers bind in a sequential fashion forming a multimeric L10(L12)X complex.

Forms part of the ribosomal stalk, playing a central role in the interaction of the ribosome with GTP-bound translation factors. This Phenylobacterium zucineum (strain HLK1) protein is Large ribosomal subunit protein uL10.